Reading from the N-terminus, the 284-residue chain is D-tagatose-1,6-bisphosphate aldolase subunit GatY (284 aa).

Catalysis depends on Asp-82, which acts as the Proton donor. Residues His-83 and His-180 each contribute to the Zn(2+) site. Gly-181 contributes to the dihydroxyacetone phosphate binding site. His-208 contacts Zn(2+). Residues 209-211 and 230-233 contribute to the dihydroxyacetone phosphate site; these read GAS and NVAT.

Belongs to the class II fructose-bisphosphate aldolase family. TagBP aldolase GatY subfamily. In terms of assembly, forms a complex with GatZ. The cofactor is Zn(2+).

It catalyses the reaction D-tagatofuranose 1,6-bisphosphate = D-glyceraldehyde 3-phosphate + dihydroxyacetone phosphate. Its pathway is carbohydrate metabolism; D-tagatose 6-phosphate degradation; D-glyceraldehyde 3-phosphate and glycerone phosphate from D-tagatose 6-phosphate: step 2/2. In terms of biological role, catalytic subunit of the tagatose-1,6-bisphosphate aldolase GatYZ, which catalyzes the reversible aldol condensation of dihydroxyacetone phosphate (DHAP or glycerone-phosphate) with glyceraldehyde 3-phosphate (G3P) to produce tagatose 1,6-bisphosphate (TBP). Requires GatZ subunit for full activity and stability. Is involved in the catabolism of galactitol. In Escherichia coli O139:H28 (strain E24377A / ETEC), this protein is D-tagatose-1,6-bisphosphate aldolase subunit GatY.